We begin with the raw amino-acid sequence, 432 residues long: D-amino acid dehydrogenase 1 (432 aa).

Position 3–17 (3–17) interacts with FAD; sequence VLVLGSGVIGTASAY. The tract at residues 410–432 is disordered; sequence GLDISRYSNSPENAKNAHPAPAH.

The protein belongs to the DadA oxidoreductase family. FAD serves as cofactor.

The catalysed reaction is a D-alpha-amino acid + A + H2O = a 2-oxocarboxylate + AH2 + NH4(+). It functions in the pathway amino-acid degradation; D-alanine degradation; NH(3) and pyruvate from D-alanine: step 1/1. Catalyzes the oxidative deamination of D-amino acids. Has very broad substrate specificity; all the D-amino acids tested can be used as the substrate except D-Glu and D-Gln. Participates in the utilization of several D-amino acids as the sole source of nitrogen, i.e. D-alanine, D-histidine, D-phenylalanine, D-serine, D-threonine, and D-valine. The protein is D-amino acid dehydrogenase 1 (dadA1) of Pseudomonas aeruginosa (strain ATCC 15692 / DSM 22644 / CIP 104116 / JCM 14847 / LMG 12228 / 1C / PRS 101 / PAO1).